A 927-amino-acid chain; its full sequence is Phosphoenolpyruvate carboxylase (927 aa).

Catalysis depends on residues H160 and K589.

The protein belongs to the PEPCase type 1 family. Requires Mg(2+) as cofactor.

It catalyses the reaction oxaloacetate + phosphate = phosphoenolpyruvate + hydrogencarbonate. Its function is as follows. Forms oxaloacetate, a four-carbon dicarboxylic acid source for the tricarboxylic acid cycle. This Rhodopseudomonas palustris (strain BisA53) protein is Phosphoenolpyruvate carboxylase.